Consider the following 523-residue polypeptide: GMP synthase [glutamine-hydrolyzing] (523 aa).

Positions 8 to 205 (KILILDFGSQ…VVGICGCECK (198 aa)) constitute a Glutamine amidotransferase type-1 domain. Cys-85 functions as the Nucleophile in the catalytic mechanism. Catalysis depends on residues His-179 and Glu-181. The region spanning 206–398 (WTAENIIERR…LGLPAEMLNR (193 aa)) is the GMPS ATP-PPase domain. 233–239 (SGGVDSS) contributes to the ATP binding site.

In terms of assembly, homodimer.

It carries out the reaction XMP + L-glutamine + ATP + H2O = GMP + L-glutamate + AMP + diphosphate + 2 H(+). Its pathway is purine metabolism; GMP biosynthesis; GMP from XMP (L-Gln route): step 1/1. Functionally, catalyzes the synthesis of GMP from XMP. In Actinobacillus pleuropneumoniae serotype 5b (strain L20), this protein is GMP synthase [glutamine-hydrolyzing].